A 376-amino-acid chain; its full sequence is Putative dihydroorotase (376 aa).

His35 and His37 together coordinate Zn(2+). Substrate is bound by residues 37 to 39 (HVR) and Asn66. 3 residues coordinate Zn(2+): Asp114, His138, and His187. Asn230 is a binding site for substrate. Asp257 contributes to the Zn(2+) binding site. Residue Asp257 is part of the active site. Residues His261 and 273–274 (YG) contribute to the substrate site.

It belongs to the metallo-dependent hydrolases superfamily. DHOase family. Class I DHOase subfamily. Zn(2+) is required as a cofactor.

It carries out the reaction (S)-dihydroorotate + H2O = N-carbamoyl-L-aspartate + H(+). Its pathway is pyrimidine metabolism; UMP biosynthesis via de novo pathway; (S)-dihydroorotate from bicarbonate: step 3/3. Catalyzes the reversible cyclization of carbamoyl aspartate to dihydroorotate. This chain is Putative dihydroorotase (pyrC), found in Thermotoga maritima (strain ATCC 43589 / DSM 3109 / JCM 10099 / NBRC 100826 / MSB8).